The chain runs to 156 residues: Ecotin (156 aa).

The signal sequence occupies residues 1 to 19; it reads MKALLIAAGVAALSSTAMA. Cys65 and Cys102 are disulfide-bonded.

It belongs to the protease inhibitor I11 (ecotin) family. In terms of assembly, homodimer.

The protein localises to the periplasm. In terms of biological role, general inhibitor of family S1 serine proteases. The sequence is that of Ecotin from Pseudomonas aeruginosa (strain UCBPP-PA14).